The chain runs to 395 residues: 8-amino-7-oxononanoate synthase (395 aa).

Pyridoxal 5'-phosphate is bound at residue 108–109 (GF). His134 provides a ligand contact to substrate. Pyridoxal 5'-phosphate-binding positions include Ser184, 209 to 212 (DDAH), and 240 to 243 (TLSK). Lys243 bears the N6-(pyridoxal phosphate)lysine mark. Thr357 is a substrate binding site.

Belongs to the class-II pyridoxal-phosphate-dependent aminotransferase family. BioF subfamily. Homodimer. The cofactor is pyridoxal 5'-phosphate.

The catalysed reaction is 6-carboxyhexanoyl-[ACP] + L-alanine + H(+) = (8S)-8-amino-7-oxononanoate + holo-[ACP] + CO2. It functions in the pathway cofactor biosynthesis; biotin biosynthesis. Its function is as follows. Catalyzes the decarboxylative condensation of pimeloyl-[acyl-carrier protein] and L-alanine to produce 8-amino-7-oxononanoate (AON), [acyl-carrier protein], and carbon dioxide. This Fervidobacterium nodosum (strain ATCC 35602 / DSM 5306 / Rt17-B1) protein is 8-amino-7-oxononanoate synthase.